Reading from the N-terminus, the 264-residue chain is Thymidylate synthase (264 aa).

Arg21 serves as a coordination point for dUMP. (6R)-5,10-methylene-5,6,7,8-tetrahydrofolate is bound at residue His51. A dUMP-binding site is contributed by 126-127; it reads RR. Cys146 (nucleophile) is an active-site residue. Residues 166–169, Asn177, and 207–209 contribute to the dUMP site; these read RSAD and HLY. Asp169 serves as a coordination point for (6R)-5,10-methylene-5,6,7,8-tetrahydrofolate. Ala263 provides a ligand contact to (6R)-5,10-methylene-5,6,7,8-tetrahydrofolate.

This sequence belongs to the thymidylate synthase family. Bacterial-type ThyA subfamily. As to quaternary structure, homodimer.

The protein localises to the cytoplasm. The catalysed reaction is dUMP + (6R)-5,10-methylene-5,6,7,8-tetrahydrofolate = 7,8-dihydrofolate + dTMP. Its pathway is pyrimidine metabolism; dTTP biosynthesis. Its function is as follows. Catalyzes the reductive methylation of 2'-deoxyuridine-5'-monophosphate (dUMP) to 2'-deoxythymidine-5'-monophosphate (dTMP) while utilizing 5,10-methylenetetrahydrofolate (mTHF) as the methyl donor and reductant in the reaction, yielding dihydrofolate (DHF) as a by-product. This enzymatic reaction provides an intracellular de novo source of dTMP, an essential precursor for DNA biosynthesis. The polypeptide is Thymidylate synthase (Rhizobium etli (strain ATCC 51251 / DSM 11541 / JCM 21823 / NBRC 15573 / CFN 42)).